A 342-amino-acid polypeptide reads, in one-letter code: Pre-mRNA-splicing factor 18 (342 aa).

N-acetylmethionine is present on methionine 1.

The protein belongs to the PRP18 family. In terms of assembly, heterodimer with PPIH. Interacts with PRPF4 and with the spliceosome. Part of a complex containing U4/U6 snRNPs. Also detected in the cytoplasm. Detected in brain, heart, liver and skeletal muscle.

It localises to the nucleus speckle. Participates in the second step of pre-mRNA splicing. Down-regulates the expression of potassium channel subunits. The chain is Pre-mRNA-splicing factor 18 (Prpf18) from Rattus norvegicus (Rat).